The sequence spans 306 residues: Methionyl-tRNA formyltransferase (306 aa).

110–113 (SLLP) is a binding site for (6S)-5,6,7,8-tetrahydrofolate.

The protein belongs to the Fmt family.

It carries out the reaction L-methionyl-tRNA(fMet) + (6R)-10-formyltetrahydrofolate = N-formyl-L-methionyl-tRNA(fMet) + (6S)-5,6,7,8-tetrahydrofolate + H(+). Attaches a formyl group to the free amino group of methionyl-tRNA(fMet). The formyl group appears to play a dual role in the initiator identity of N-formylmethionyl-tRNA by promoting its recognition by IF2 and preventing the misappropriation of this tRNA by the elongation apparatus. The polypeptide is Methionyl-tRNA formyltransferase (Brucella suis (strain ATCC 23445 / NCTC 10510)).